The following is a 1098-amino-acid chain: Probable arabinosyltransferase B (1098 aa).

12 consecutive transmembrane segments (helical) span residues 28 to 50 (WVATIAGLIGFVLSVATPLLPVV), 217 to 239 (LKLLAIIGAIVATVVALIALWRL), 271 to 293 (ASWRTFTLTDAVVIFGFLLWHVI), 402 to 419 (LRPEGIIALGSLVTYVLI), 434 to 456 (AVVTAAFTLGVQPTGLIAVAALV), 472 to 494 (LVGTLPLVSPMLAAGTVILTVVF), 541 to 558 (FGFLITALCLFTAVFIML), 570 to 587 (PAWRLMGVIFGTMFFLMF), 597 to 619 (GLFAAVGAAMAALTTVLVSPSVL), 626 to 648 (MAFLAALFFLLALCWATTNGWWY), 663 to 685 (IDGITVSTIFFALFAIAAGYAAW), and 698 to 720 (LIRALTTAPVPIVAGFMAAVFVA).

The protein belongs to the emb family.

The protein localises to the cell membrane. Its function is as follows. Arabinosyl transferase responsible for the polymerization of arabinose into the arabinan of arabinogalactan. The chain is Probable arabinosyltransferase B (embB) from Mycobacterium bovis (strain ATCC BAA-935 / AF2122/97).